A 144-amino-acid chain; its full sequence is 3-hydroxyacyl-[acyl-carrier-protein] dehydratase FabZ (144 aa).

The active site involves H48.

Belongs to the thioester dehydratase family. FabZ subfamily.

It is found in the cytoplasm. The catalysed reaction is a (3R)-hydroxyacyl-[ACP] = a (2E)-enoyl-[ACP] + H2O. Its function is as follows. Involved in unsaturated fatty acids biosynthesis. Catalyzes the dehydration of short chain beta-hydroxyacyl-ACPs and long chain saturated and unsaturated beta-hydroxyacyl-ACPs. The sequence is that of 3-hydroxyacyl-[acyl-carrier-protein] dehydratase FabZ from Bacillus pumilus (strain SAFR-032).